A 76-amino-acid polypeptide reads, in one-letter code: MKKNIILNLIGLRCPEPIMIIRKTIRNMKDNEKILILSDDPATKRDIPNFCYFMEHKLLKNEIKVKPYRYLLKKGL.

The Cysteine persulfide intermediate role is filled by Cys-14.

It belongs to the sulfur carrier protein TusA family. As to quaternary structure, interacts with IscS.

Its subcellular location is the cytoplasm. It functions in the pathway tRNA modification. Sulfur carrier protein involved in sulfur trafficking in the cell. Part of a sulfur-relay system required for 2-thiolation during synthesis of 2-thiouridine of the modified wobble base 5-methylaminomethyl-2-thiouridine (mnm(5)s(2)U) in tRNA. Interacts with IscS and stimulates its cysteine desulfurase activity. Accepts an activated sulfur from IscS, which is then transferred to TusD, and thus determines the direction of sulfur flow from IscS to 2-thiouridine formation. Also appears to be involved in sulfur transfer for the biosynthesis of molybdopterin. The polypeptide is Sulfur carrier protein TusA (Buchnera aphidicola subsp. Acyrthosiphon pisum (strain Tuc7)).